A 176-amino-acid chain; its full sequence is Bifunctional protein PyrR (176 aa).

A PRPP-binding motif is present at residues V93–T105.

Belongs to the purine/pyrimidine phosphoribosyltransferase family. PyrR subfamily. As to quaternary structure, homodimer and homohexamer; in equilibrium.

The enzyme catalyses UMP + diphosphate = 5-phospho-alpha-D-ribose 1-diphosphate + uracil. Functionally, regulates transcriptional attenuation of the pyrimidine nucleotide (pyr) operon by binding in a uridine-dependent manner to specific sites on pyr mRNA. This disrupts an antiterminator hairpin in the RNA and favors formation of a downstream transcription terminator, leading to a reduced expression of downstream genes. Also displays a weak uracil phosphoribosyltransferase activity which is not physiologically significant. The sequence is that of Bifunctional protein PyrR from Streptococcus mutans serotype c (strain ATCC 700610 / UA159).